A 67-amino-acid chain; its full sequence is Ferredoxin (67 aa).

4Fe-4S ferredoxin-type domains follow at residues 3 to 31 (WKVSVDQDTCIGDAICASLCPDVFEMNDE) and 36 to 67 (PKVEVIEDEELYNCAKEAMEACPVSAITIEEA). [4Fe-4S] cluster contacts are provided by cysteine 12, aspartate 15, and cysteine 18. Cysteine 22 and cysteine 49 are oxidised to a cystine. Position 57 (cysteine 57) interacts with [4Fe-4S] cluster.

In terms of assembly, homodimer. [4Fe-4S] cluster is required as a cofactor. Requires [3Fe-4S] cluster as cofactor.

Ferredoxins are iron-sulfur proteins that transfer electrons in a wide variety of metabolic reactions. The polypeptide is Ferredoxin (fdxA) (Pyrococcus furiosus (strain ATCC 43587 / DSM 3638 / JCM 8422 / Vc1)).